A 118-amino-acid polypeptide reads, in one-letter code: Small ribosomal subunit protein uS13 (118 aa).

Residues 94–118 (GLPVRGQRTKTNARTRKGPRKPIKK) are disordered.

It belongs to the universal ribosomal protein uS13 family. As to quaternary structure, part of the 30S ribosomal subunit. Forms a loose heterodimer with protein S19. Forms two bridges to the 50S subunit in the 70S ribosome.

Located at the top of the head of the 30S subunit, it contacts several helices of the 16S rRNA. In the 70S ribosome it contacts the 23S rRNA (bridge B1a) and protein L5 of the 50S subunit (bridge B1b), connecting the 2 subunits; these bridges are implicated in subunit movement. Contacts the tRNAs in the A and P-sites. This chain is Small ribosomal subunit protein uS13, found in Erwinia tasmaniensis (strain DSM 17950 / CFBP 7177 / CIP 109463 / NCPPB 4357 / Et1/99).